Here is a 390-residue protein sequence, read N- to C-terminus: Dual-specificity RNA methyltransferase RlmN (390 aa).

Glutamate 126 (proton acceptor) is an active-site residue. The Radical SAM core domain maps to 134–374 (TEDRGAVCLS…APVRTPRGQD (241 aa)). Cysteine 141 and cysteine 379 are disulfide-bonded. Residues cysteine 148, cysteine 152, and cysteine 155 each coordinate [4Fe-4S] cluster. Residues 205 to 206 (GE), serine 237, 259 to 261 (SLH), and asparagine 336 contribute to the S-adenosyl-L-methionine site. Catalysis depends on cysteine 379, which acts as the S-methylcysteine intermediate.

It belongs to the radical SAM superfamily. RlmN family. It depends on [4Fe-4S] cluster as a cofactor.

It localises to the cytoplasm. The catalysed reaction is adenosine(2503) in 23S rRNA + 2 reduced [2Fe-2S]-[ferredoxin] + 2 S-adenosyl-L-methionine = 2-methyladenosine(2503) in 23S rRNA + 5'-deoxyadenosine + L-methionine + 2 oxidized [2Fe-2S]-[ferredoxin] + S-adenosyl-L-homocysteine. It carries out the reaction adenosine(37) in tRNA + 2 reduced [2Fe-2S]-[ferredoxin] + 2 S-adenosyl-L-methionine = 2-methyladenosine(37) in tRNA + 5'-deoxyadenosine + L-methionine + 2 oxidized [2Fe-2S]-[ferredoxin] + S-adenosyl-L-homocysteine. Specifically methylates position 2 of adenine 2503 in 23S rRNA and position 2 of adenine 37 in tRNAs. m2A2503 modification seems to play a crucial role in the proofreading step occurring at the peptidyl transferase center and thus would serve to optimize ribosomal fidelity. This Acidiphilium cryptum (strain JF-5) protein is Dual-specificity RNA methyltransferase RlmN.